Here is a 1399-residue protein sequence, read N- to C-terminus: Alpha-glucan water dikinase 1, chloroplastic (1399 aa).

A chloroplast-targeting transit peptide spans 1–75; sequence MSNSVVHNLL…GRPLSFVPRA (75 aa). Residue Val-76 is modified to N-acetylvaline. The segment at 265 to 306 is disordered; the sequence is LLKKDNSNESPKSNGTSSSGREEKKKVSKQPERKKNYNTDKI. Residues 272–283 show a composition bias toward polar residues; sequence NESPKSNGTSSS. The segment covering 284–306 has biased composition (basic and acidic residues); sequence GREEKKKVSKQPERKKNYNTDKI. His-1004 functions as the Tele-phosphohistidine intermediate in the catalytic mechanism.

Belongs to the PEP-utilizing enzyme family. Homodimer. The cofactor is Mg(2+).

The protein resides in the plastid. The protein localises to the chloroplast. It catalyses the reaction [(1-&gt;4)-alpha-D-glucosyl](n) + n ATP + n H2O = [(1-&gt;4)-6-phospho-alpha-D-glucosyl](n) + n AMP + n phosphate + 2n H(+). Functionally, mediates the incorporation of phosphate into starch-like alpha-glucan, mostly at the C-6 position of glucose units. Acts as an overall regulator of starch mobilization. Required for starch degradation, suggesting that the phosphate content of starch regulates its degradability. In Arabidopsis thaliana (Mouse-ear cress), this protein is Alpha-glucan water dikinase 1, chloroplastic.